The sequence spans 217 residues: Probable transaldolase (217 aa).

Catalysis depends on Lys83, which acts as the Schiff-base intermediate with substrate.

It belongs to the transaldolase family. Type 3B subfamily.

It is found in the cytoplasm. It catalyses the reaction D-sedoheptulose 7-phosphate + D-glyceraldehyde 3-phosphate = D-erythrose 4-phosphate + beta-D-fructose 6-phosphate. It participates in carbohydrate degradation; pentose phosphate pathway; D-glyceraldehyde 3-phosphate and beta-D-fructose 6-phosphate from D-ribose 5-phosphate and D-xylulose 5-phosphate (non-oxidative stage): step 2/3. Functionally, transaldolase is important for the balance of metabolites in the pentose-phosphate pathway. In Caulobacter vibrioides (strain NA1000 / CB15N) (Caulobacter crescentus), this protein is Probable transaldolase.